A 195-amino-acid polypeptide reads, in one-letter code: MPEFLGPIAGFGVTLSTMFKKPETEFYPEEKRPTAPGYHGRHQLNRYADGLEKCIGCELCAWACPADAIYVEGADNTEEERFSPGERYGQVYQINYLRCIGCGLCVEACPTRALTMTNEYEMVDDNRAGLIYEKDRLLAPLKTDMTAPPHALRPGTTQDDYYRGDITAVPEQAAPEQAAPEQPAPEREPNPETEK.

4Fe-4S ferredoxin-type domains are found at residues 44 to 74 (LNRY…VEGA) and 90 to 119 (QVYQ…MTNE). [4Fe-4S] cluster contacts are provided by Cys54, Cys57, Cys60, Cys64, Cys99, Cys102, Cys105, and Cys109. Residues 145 to 195 (MTAPPHALRPGTTQDDYYRGDITAVPEQAAPEQAAPEQPAPEREPNPETEK) form a disordered region. Low complexity predominate over residues 168 to 181 (AVPEQAAPEQAAPE). A compositionally biased stretch (basic and acidic residues) spans 184-195 (APEREPNPETEK).

The protein belongs to the complex I 23 kDa subunit family. As to quaternary structure, NDH-1 is composed of 14 different subunits. Subunits NuoA, H, J, K, L, M, N constitute the membrane sector of the complex. The cofactor is [4Fe-4S] cluster.

The protein resides in the cell membrane. It carries out the reaction a quinone + NADH + 5 H(+)(in) = a quinol + NAD(+) + 4 H(+)(out). In terms of biological role, NDH-1 shuttles electrons from NADH, via FMN and iron-sulfur (Fe-S) centers, to quinones in the respiratory chain. The immediate electron acceptor for the enzyme in this species is believed to be ubiquinone. Couples the redox reaction to proton translocation (for every two electrons transferred, four hydrogen ions are translocated across the cytoplasmic membrane), and thus conserves the redox energy in a proton gradient. The polypeptide is NADH-quinone oxidoreductase subunit I (Rhodococcus erythropolis (strain PR4 / NBRC 100887)).